Here is a 110-residue protein sequence, read N- to C-terminus: Large ribosomal subunit protein P1B (110 aa).

A compositionally biased stretch (low complexity) spans 69–85 (PAAGGAGAPAAAAGGEA). The interval 69–110 (PAAGGAGAPAAAAGGEAAAEEQKEEAKEEEESDEDMGFGLFD) is disordered. Residues 95-104 (KEEEESDEDM) are compositionally biased toward acidic residues.

It belongs to the eukaryotic ribosomal protein P1/P2 family. In terms of assembly, component of the large ribosomal subunit (LSU). Mature yeast ribosomes consist of a small (40S) and a large (60S) subunit. The 40S small subunit contains 1 molecule of ribosomal RNA (18S rRNA) and at least 33 different proteins. The large 60S subunit contains 3 rRNA molecules (25S, 5.8S and 5S rRNA) and at least 46 different proteins. The acidic ribosomal P-proteins form the stalk structure of the 60S subunit. They are organized as a pentameric complex in which uL10/P0 interacts with 2 heterodimers of P1 and P2 proteins.

It localises to the cytoplasm. In terms of biological role, component of the ribosome, a large ribonucleoprotein complex responsible for the synthesis of proteins in the cell. The small ribosomal subunit (SSU) binds messenger RNAs (mRNAs) and translates the encoded message by selecting cognate aminoacyl-transfer RNA (tRNA) molecules. The large subunit (LSU) contains the ribosomal catalytic site termed the peptidyl transferase center (PTC), which catalyzes the formation of peptide bonds, thereby polymerizing the amino acids delivered by tRNAs into a polypeptide chain. The nascent polypeptides leave the ribosome through a tunnel in the LSU and interact with protein factors that function in enzymatic processing, targeting, and the membrane insertion of nascent chains at the exit of the ribosomal tunnel. The sequence is that of Large ribosomal subunit protein P1B (rpp102) from Schizosaccharomyces pombe (strain 972 / ATCC 24843) (Fission yeast).